Reading from the N-terminus, the 172-residue chain is Peptidyl-prolyl cis-trans isomerase CYP18-4 (172 aa).

The PPIase cyclophilin-type domain occupies 7–170; it reads FFDMSLSGTP…KVVTITDCGQ (164 aa).

Belongs to the cyclophilin-type PPIase family. Interacts with A.tumefaciens VirD2. In terms of tissue distribution, ubiquitous, with higher levels in roots and flowers. Confined to vascular tissues. Also detected in stigmas, base of siliques and anthers.

It is found in the cytoplasm. It catalyses the reaction [protein]-peptidylproline (omega=180) = [protein]-peptidylproline (omega=0). Binds cyclosporin A (CsA). CsA mediates some of its effects via an inhibitory action on PPIase. In terms of biological role, PPIases accelerate the folding of proteins. It catalyzes the cis-trans isomerization of proline imidic peptide bonds in oligopeptides. In Arabidopsis thaliana (Mouse-ear cress), this protein is Peptidyl-prolyl cis-trans isomerase CYP18-4 (CYP18-4).